We begin with the raw amino-acid sequence, 207 residues long: Glycerol-3-phosphate acyltransferase (207 aa).

5 consecutive transmembrane segments (helical) span residues 4 to 24, 58 to 78, 86 to 106, 120 to 140, and 162 to 182; these read VVAT…SFAV, ILTL…AQLL, DMGI…PVFH, ILLA…LIIA, and VLLF…VLLI.

Belongs to the PlsY family. As to quaternary structure, probably interacts with PlsX.

The protein resides in the cell inner membrane. The catalysed reaction is an acyl phosphate + sn-glycerol 3-phosphate = a 1-acyl-sn-glycero-3-phosphate + phosphate. The protein operates within lipid metabolism; phospholipid metabolism. In terms of biological role, catalyzes the transfer of an acyl group from acyl-phosphate (acyl-PO(4)) to glycerol-3-phosphate (G3P) to form lysophosphatidic acid (LPA). This enzyme utilizes acyl-phosphate as fatty acyl donor, but not acyl-CoA or acyl-ACP. This is Glycerol-3-phosphate acyltransferase from Ralstonia nicotianae (strain ATCC BAA-1114 / GMI1000) (Ralstonia solanacearum).